The primary structure comprises 194 residues: GTP cyclohydrolase 1 (194 aa).

Positions 83, 86, and 155 each coordinate Zn(2+).

Belongs to the GTP cyclohydrolase I family. As to quaternary structure, toroid-shaped homodecamer, composed of two pentamers of five dimers.

The enzyme catalyses GTP + H2O = 7,8-dihydroneopterin 3'-triphosphate + formate + H(+). Its pathway is cofactor biosynthesis; 7,8-dihydroneopterin triphosphate biosynthesis; 7,8-dihydroneopterin triphosphate from GTP: step 1/1. The protein is GTP cyclohydrolase 1 of Streptococcus pyogenes serotype M3 (strain ATCC BAA-595 / MGAS315).